The chain runs to 554 residues: MKLLKDSGAALLALFFVLVYLLPVNSRLLWQPDETRYAEISREMLQRGDWVVPYFMDIRYFEKPVAGYWFNNISQWIFGDSNFAVRFGSIFSTALSAVLVYWLATLLWRNRSTSVLATLIYLSFLLVFGIGTYAVLDPMISLWLTAAMVSFYLTLKAENWQQKVGAYALLGVACGMGFMTKGFLALAVPVIAVLPIVIQQKRIKDLVVFGPIAIVCAVLLSLPWALAIAQREPDFWNYFFWVEHIQRFAEASAQHKSPIWYYLPILCIGVLPWLGLLPGALFKGWRERATKPELFFLLSWVVMPLLFFSVAKGKLPTYILPCMAPLSLLMAAYATDCANNIRMRALKINGVINLLFGVACALVIVVIGLGLVKDIVAYGPQENQKVWLGVLAFAGWGVTGFITLRNNARNWRWAAACPLLFILLVGYLIPQQVVDSKQPQNFIKNNFSELSSSRYVLTDSVGVAAGLAWELKRSDILMFSEKGELTYGLAYPDSQDNYISNDDFPTWLAQARKKGDVSLVVQLARNEALPAHLPSADKVNLMNRLALLWYQKTP.

The next 11 helical transmembrane spans lie at 4-24 (LKDSGAALLALFFVLVYLLPV), 87-107 (FGSIFSTALSAVLVYWLATLL), 115-135 (VLATLIYLSFLLVFGIGTYAV), 178-198 (FMTKGFLALAVPVIAVLPIVI), 206-226 (LVVFGPIAIVCAVLLSLPWAL), 262-282 (YLPILCIGVLPWLGLLPGALF), 293-313 (ELFFLLSWVVMPLLFFSVAKG), 315-335 (LPTYILPCMAPLSLLMAAYAT), 351-371 (VINLLFGVACALVIVVIGLGL), 384-404 (QKVWLGVLAFAGWGVTGFITL), and 414-434 (AAACPLLFILLVGYLIPQQVV).

Belongs to the glycosyltransferase 83 family.

The protein localises to the cell inner membrane. The catalysed reaction is 4-amino-4-deoxy-alpha-L-arabinopyranosyl di-trans,octa-cis-undecaprenyl phosphate + lipid IVA = lipid IIA + di-trans,octa-cis-undecaprenyl phosphate.. Its pathway is lipopolysaccharide metabolism; 4-amino-4-deoxy-beta-L-arabinose-lipid A biosynthesis. Functionally, catalyzes the transfer of the L-Ara4N moiety of the glycolipid undecaprenyl phosphate-alpha-L-Ara4N to lipid A. The modified arabinose is attached to lipid A and is required for resistance to polymyxin and cationic antimicrobial peptides. The protein is Undecaprenyl phosphate-alpha-4-amino-4-deoxy-L-arabinose arabinosyl transferase of Yersinia pseudotuberculosis serotype O:3 (strain YPIII).